We begin with the raw amino-acid sequence, 188 residues long: Peroxiredoxin y4vD (188 aa).

The Thioredoxin domain maps to 2-152 (PVKKRVPFVA…VEQWFEEEGF (151 aa)). Catalysis depends on Cys56, which acts as the Cysteine sulfenic acid (-SOH) intermediate (for peroxiredoxin activity).

The protein belongs to the peroxiredoxin family. Prx5 subfamily. In terms of assembly, monomer.

The catalysed reaction is a hydroperoxide + 2 glutathione = an alcohol + glutathione disulfide + H2O. Its function is as follows. Thiol-specific peroxidase that catalyzes the reduction of hydrogen peroxide and organic hydroperoxides to water and alcohols, respectively. Plays a role in cell protection against oxidative stress by detoxifying peroxides. The sequence is that of Peroxiredoxin y4vD from Sinorhizobium fredii (strain NBRC 101917 / NGR234).